A 158-amino-acid chain; its full sequence is Rhombotin-2 (158 aa).

2 consecutive LIM zinc-binding domains span residues 30-89 (CGGC…RLFG) and 94-153 (CASC…EWTK).

Interacts with BEX2 and KDM5A. Interacts via its LIM domains with ELF2 and LDB1. Also interacts with basic helix-loop-helix protein TAL1/SCL and can assemble in a complex with LMO2 and TAL1/SCL. In terms of tissue distribution, expressed in early mouse development in central nervous system, lung, kidney, liver and spleen but only very low levels occur in thymus.

It localises to the nucleus. Functionally, acts with TAL1/SCL to regulate red blood cell development. Also acts with LDB1 to maintain erythroid precursors in an immature state. This chain is Rhombotin-2 (Lmo2), found in Mus musculus (Mouse).